A 105-amino-acid polypeptide reads, in one-letter code: Large ribosomal subunit protein uL24 (105 aa).

This sequence belongs to the universal ribosomal protein uL24 family. Part of the 50S ribosomal subunit.

Its function is as follows. One of two assembly initiator proteins, it binds directly to the 5'-end of the 23S rRNA, where it nucleates assembly of the 50S subunit. Functionally, one of the proteins that surrounds the polypeptide exit tunnel on the outside of the subunit. The sequence is that of Large ribosomal subunit protein uL24 from Vibrio campbellii (strain ATCC BAA-1116).